The chain runs to 492 residues: V-type proton ATPase subunit B 2 (492 aa).

Belongs to the ATPase alpha/beta chains family. V-ATPase is a heteromultimeric enzyme composed of a peripheral catalytic V1 complex (main components: subunits A, B, C, D, E, and F) attached to an integral membrane V0 proton pore complex (main component: the proteolipid protein).

In terms of biological role, non-catalytic subunit of the peripheral V1 complex of vacuolar ATPase. V-ATPase is responsible for acidifying a variety of intracellular compartments in eukaryotic cells. This chain is V-type proton ATPase subunit B 2, found in Acetabularia acetabulum (Mermaid's wine glass).